Here is a 228-residue protein sequence, read N- to C-terminus: Large ribosomal subunit protein uL16 (228 aa).

The protein belongs to the universal ribosomal protein uL16 family. As to quaternary structure, component of the small ribosomal subunit. Mature ribosomes consist of a small (40S) and a large (60S) subunit. The 40S subunit contains about 33 different proteins and 1 molecule of RNA (18S). The 60S subunit contains about 49 different proteins and 3 molecules of RNA (25S, 5.8S and 5S).

The polypeptide is Large ribosomal subunit protein uL16 (RPL10) (Pinus taeda (Loblolly pine)).